Here is a 375-residue protein sequence, read N- to C-terminus: Chaperone protein DnaJ (375 aa).

Residues Asp5–Gly69 enclose the J domain. The CR-type zinc finger occupies Gly131–Asn213. Cys144, Cys147, Cys161, Cys164, Cys187, Cys190, Cys201, and Cys204 together coordinate Zn(2+). CXXCXGXG motif repeat units follow at residues Cys144–Gly151, Cys161–Gly168, Cys187–Gly194, and Cys201–Gly208.

It belongs to the DnaJ family. Homodimer. Zn(2+) serves as cofactor.

The protein resides in the cytoplasm. Participates actively in the response to hyperosmotic and heat shock by preventing the aggregation of stress-denatured proteins and by disaggregating proteins, also in an autonomous, DnaK-independent fashion. Unfolded proteins bind initially to DnaJ; upon interaction with the DnaJ-bound protein, DnaK hydrolyzes its bound ATP, resulting in the formation of a stable complex. GrpE releases ADP from DnaK; ATP binding to DnaK triggers the release of the substrate protein, thus completing the reaction cycle. Several rounds of ATP-dependent interactions between DnaJ, DnaK and GrpE are required for fully efficient folding. Also involved, together with DnaK and GrpE, in the DNA replication of plasmids through activation of initiation proteins. The polypeptide is Chaperone protein DnaJ (Oceanobacillus iheyensis (strain DSM 14371 / CIP 107618 / JCM 11309 / KCTC 3954 / HTE831)).